The following is a 164-amino-acid chain: Vesiculogenesis and immune response regulator (164 aa).

In terms of processing, could be O-mannosylated. Is likely mannosylated on Thr-61 when overexpressed in M.smegmatis.

It localises to the cell inner membrane. It is found in the cytoplasm. Virulence factor that regulates vesiculogenesis. Acts by regulating the production of mycobacterial membrane vesicles (MV) bearing Toll-like receptor 2 (TLR2) ligands, including the lipoproteins LpqH, a major host TLR2 agonist, and SodC. By restraining the release of most of the material that activates host cells through TLR2, VirR reduces the immunostimulant potential of M.tuberculosis and increases its virulence. May contribute to cell envelope integrity. Functionally, when overexpressed in M.smegmatis, it modulates the production of IL-10, IL-12 p40 and TNF-alpha by RAW264.7 macrophages and it decreases the killing of M.smegmatis. In Mycobacterium tuberculosis (strain ATCC 25618 / H37Rv), this protein is Vesiculogenesis and immune response regulator.